The chain runs to 528 residues: Phosphoenolpyruvate carboxykinase (ATP) (528 aa).

The substrate site is built by Arg56, Tyr192, and Lys198. ATP is bound by residues Lys198, His217, and Gly233–Thr241. Lys198 and His217 together coordinate Mn(2+). Position 254 (Asp254) interacts with Mn(2+). 3 residues coordinate ATP: Glu282, Arg319, and Thr444. Substrate is bound at residue Arg319.

The protein belongs to the phosphoenolpyruvate carboxykinase (ATP) family. Mn(2+) is required as a cofactor.

Its subcellular location is the cytoplasm. It carries out the reaction oxaloacetate + ATP = phosphoenolpyruvate + ADP + CO2. The protein operates within carbohydrate biosynthesis; gluconeogenesis. Functionally, involved in the gluconeogenesis. Catalyzes the conversion of oxaloacetate (OAA) to phosphoenolpyruvate (PEP) through direct phosphoryl transfer between the nucleoside triphosphate and OAA. The polypeptide is Phosphoenolpyruvate carboxykinase (ATP) (Bacillus cereus (strain G9842)).